The following is a 328-amino-acid chain: MNDKWYRHIIGARTIKTGLATFFTSLFCMLLNLTPIFAILTAIVTIEPTAKASLKKGYKRLPATVIGALFAVVFTYVFGDQSPLSYALSATFTILICTKLNLQVGTTVAVLTSVAMIPSIHEAYVFNFFSRLLTALIGLVTAGLVNFIILPPKYYHQLEEQLALSEKKMYRLFYERCNELLLGKFSSEKTSKELSKLNIIAQKVETLMSYQRDELHYHKNEDNWKLLNRLTNRAYNNRLFISHLSNIIYLPKHTSIAFDANEKIALINISNSINGIIQKGSFARQKKSIATLKSSVKQMDEFDQNQMKSTLIYEILLIYKILDSRYAK.

4 consecutive transmembrane segments (helical) span residues 26 to 46, 61 to 81, 109 to 129, and 132 to 152; these read LFCM…IVTI, LPAT…FGDQ, AVLT…FNFF, and LLTA…ILPP.

The protein belongs to the UPF0421 family.

The protein localises to the cell membrane. The sequence is that of UPF0421 protein SE_1574 from Staphylococcus epidermidis (strain ATCC 12228 / FDA PCI 1200).